A 471-amino-acid chain; its full sequence is Cysteine--tRNA ligase (471 aa).

C29 contributes to the Zn(2+) binding site. The short motif at 31-41 (PTVYNYIHIGN) is the 'HIGH' region element. C209, H234, and E238 together coordinate Zn(2+). Residues 266–270 (KMSKS) carry the 'KMSKS' region motif. K269 provides a ligand contact to ATP.

Belongs to the class-I aminoacyl-tRNA synthetase family. As to quaternary structure, monomer. Zn(2+) is required as a cofactor.

Its subcellular location is the cytoplasm. It catalyses the reaction tRNA(Cys) + L-cysteine + ATP = L-cysteinyl-tRNA(Cys) + AMP + diphosphate. The polypeptide is Cysteine--tRNA ligase (Listeria innocua serovar 6a (strain ATCC BAA-680 / CLIP 11262)).